The chain runs to 599 residues: MAASADLSKSSPTPNGIPSSDTANDTMDPFHACSILKQLKTMYDEGQLTDIVVEVDHGKTFSCHRNVLAAISPYFRSMFTSGLTESTQKEVRIIGVEAESMDLVLNYAYTSRVILTEANVQALFTTASIFQIPSIQDQCAKYMISHLDPQNSIGVFIFADHYGHQELGDRSKEYIRKKFLCVTKEQEFLQLTKDQLISILDSDDLNVDREEHVYESIIRWFEHEQSEREVHLPEIFAKCIRFPLMEDTFIEKIPPQFAQAIVKSCGEPSNTSGCTQRLGMTASEMIICFDAAHKHSGKKQTVPCLDIVTGRVFKLCKPPNDLREVGILVSPDNDIYIAGGYRPSSSEVSIDHKAENDFWMYDHSTNRWLSKPSLLRARIGCKLVYCCGKMYAIGGRVYEGDGRNSLKSVECYDSRENCWMTVCAMPVAMEFHNAVEHKEKIYVLQGEFFLFYEPQKDYWGFLTPMTVPRIQGLAAVYKDSIYYIAGTCGNHQRVFTVEAYDIELNKWTRKKDFPCDQSINPYLKLVLFQNKLHLFVRATQVTVEEHIFRTSRKNSLYQYDDIADQWMKVYETPDRLWDLGRHFECAVAKLYPQCLQKVL.

Residues 1–25 (MAASADLSKSSPTPNGIPSSDTAND) form a disordered region. Polar residues predominate over residues 7 to 25 (LSKSSPTPNGIPSSDTAND). Positions 49–117 (TDIVVEVDHG…AYTSRVILTE (69 aa)) constitute a BTB domain. One can recognise a BACK domain in the interval 152–254 (SIGVFIFADH…MEDTFIEKIP (103 aa)). Kelch repeat units lie at residues 334-388 (DIYI…YCCG), 389-439 (KMYA…EHKE), 441-479 (IYVL…VYKD), 481-530 (IYYI…LFQN), and 540-586 (QVTV…FECA).

Belongs to the KBTBD8 family. As to quaternary structure, component of the BCR(KBTBD8) E3 ubiquitin ligase complex, at least composed of CUL3, KBTBD8 and RBX1.

It is found in the cytoplasm. The protein localises to the cytoskeleton. Its subcellular location is the spindle. It localises to the golgi apparatus. Its function is as follows. Substrate-specific adapter of a BCR (BTB-CUL3-RBX1) E3 ubiquitin ligase complex that acts as a regulator of neural crest specification. The BCR(KBTBD8) complex acts by mediating monoubiquitination of NOLC1 and TCOF1: monoubiquitination promotes the formation of a NOLC1-TCOF1 complex that acts as a platform to connect RNA polymerase I with enzymes responsible for ribosomal processing and modification, leading to remodel the translational program of differentiating cells in favor of neural crest specification. In Mus musculus (Mouse), this protein is Kelch repeat and BTB domain-containing protein 8 (Kbtbd8).